We begin with the raw amino-acid sequence, 315 residues long: MTNDFHHITVLLHETVDMLDIKPDGIYVDATLGGAGHSEYLLSQLGPDGHLYAFDQDQKAIDNAHIRLKKYVDTGQVTFIKDNFRNLSSNLKALGVSEINGICYDLGVSSPQLDERERGFSYKQDAPLDMRMNREQSLTAYDVVNTYSYHDLVRIFFKYGEDKFSKQIARKIEQVRAEKTISTTTELAEIIKSSKSAKELKKKGHPAKQIFQAIRIEVNDELGAADESIQQAMDLLAVDGRISVITFHSLEDRLTKQLFKEASTVEVPKGLPFIPDDLQPKMELVNRKPILPSQEELEANNRAHSAKLRVARRIR.

S-adenosyl-L-methionine contacts are provided by residues 35-37 (AGH), aspartate 55, phenylalanine 84, aspartate 105, and glutamine 112.

The protein belongs to the methyltransferase superfamily. RsmH family.

The protein resides in the cytoplasm. It catalyses the reaction cytidine(1402) in 16S rRNA + S-adenosyl-L-methionine = N(4)-methylcytidine(1402) in 16S rRNA + S-adenosyl-L-homocysteine + H(+). Functionally, specifically methylates the N4 position of cytidine in position 1402 (C1402) of 16S rRNA. This Streptococcus agalactiae serotype Ia (strain ATCC 27591 / A909 / CDC SS700) protein is Ribosomal RNA small subunit methyltransferase H.